A 375-amino-acid polypeptide reads, in one-letter code: Peroxisomal targeting signal 2 receptor (375 aa).

6 WD repeats span residues 58-89, 102-133, 172-203, 218-249, 281-312, and 340-372; these read LTQDCLFDLAWNESHENQVLVAQGDGTLRLFD, EHEREVFSCNWNLVNRQNFLSSSWDGSIKIWS, KNRNCVYQAQFSPHDQNLVLSCSGNSYASLFD, HSGLEALTCDFNKYRPYVVATGGVDNAIRIWD, AHGLAIRKVTWSPHHSNILMSASYDMTCRIWR, and QHSEFVFGADWSLWGKPGYVASTAWDGNLFVWN.

This sequence belongs to the WD repeat peroxin-7 family. In terms of assembly, interacts with PEX21.

It localises to the cytoplasm. The protein localises to the cytosol. Its subcellular location is the peroxisome matrix. Receptor required for the peroxisomal import of proteins containing a C-terminal PTS2-type peroxisomal targeting signal, such as 3-oxoacyl-CoA thiolase. Specifically binds to cargo proteins containing a PTS2 peroxisomal targeting signal in the cytosol. Cargo protein-binding triggers interaction with PEX21 and formation of a ternary complex composed of PEX21 and PEX7 along with PTS2-containing cargo proteins, which is tranlocated into peroxisomes by passing through the PEX13-PEX14 docking complex. This Saccharomyces cerevisiae (strain ATCC 204508 / S288c) (Baker's yeast) protein is Peroxisomal targeting signal 2 receptor.